The primary structure comprises 259 residues: Global transcriptional regulator CodY (259 aa).

Residues 1-155 are GAF domain; sequence MNLLEKTRQL…SATVVGMEIL (155 aa). The segment at residues 203–222 is a DNA-binding region (H-T-H motif); sequence ASKIADRVGITRSVIVNALR.

It belongs to the CodY family.

The protein resides in the cytoplasm. DNA-binding global transcriptional regulator which is involved in the adaptive response to starvation and acts by directly or indirectly controlling the expression of numerous genes in response to nutrient availability. During rapid exponential growth, CodY is highly active and represses genes whose products allow adaptation to nutrient depletion. The protein is Global transcriptional regulator CodY of Exiguobacterium sp. (strain ATCC BAA-1283 / AT1b).